The primary structure comprises 119 residues: Insulin growth factor-like family member 2 (119 aa).

Positions 1–25 (MVPRIFAPAYVSVCLLLLCPREVIA) are cleaved as a signal peptide.

It belongs to the IGFL family. Detected in cerebellum, heart, placenta, spleen, stomach, testis and thymus.

The protein localises to the secreted. Functionally, potential ligand of the IGFLR1 cell membrane receptor. The protein is Insulin growth factor-like family member 2 (IGFL2) of Homo sapiens (Human).